A 441-amino-acid polypeptide reads, in one-letter code: CBL-interacting serine/threonine-protein kinase 6 (441 aa).

The Protein kinase domain maps to 24 to 278 (YELGRLLGHG…IEKVMDSPWF (255 aa)). ATP-binding positions include 30–38 (LGHGTFAKV) and Lys-53. The active-site Proton acceptor is the Asp-146. The tract at residues 164-193 (DFGLSAFTEHLKQDGLLHTTCGTPAYVAPE) is activation loop. Position 168 is a phosphoserine (Ser-168). Thr-182 carries the phosphothreonine modification. An NAF domain is found at 310-334 (EETETLNAFHIIALSEGFDLSPLFE). The PPI stretch occupies residues 341–371 (KREMRFATSRPASSVISSLEEAARVGNKFDV).

The protein belongs to the protein kinase superfamily. CAMK Ser/Thr protein kinase family. SNF1 subfamily. In terms of assembly, part of a K(+)-channel calcium-sensing kinase/phosphatase complex composed by a calcium sensor CBL (CBL1, CBL2, CBL3 or CBL9), a kinase CIPK (CIPK6, CIPK16 or CIPK23), a phosphatase PP2C (AIP1) and a K(+)-channel (AKT1). Interacts with AKT1, AKT2,CBL1, CBL2, CBL3, CBL4/SOS3 and CBL9. Requires Mn(2+) as cofactor. In terms of processing, autophosphorylated. In terms of tissue distribution, expressed in roots and shoots.

The protein resides in the endoplasmic reticulum. It carries out the reaction L-seryl-[protein] + ATP = O-phospho-L-seryl-[protein] + ADP + H(+). It catalyses the reaction L-threonyl-[protein] + ATP = O-phospho-L-threonyl-[protein] + ADP + H(+). In terms of biological role, CIPK serine-threonine protein kinases interact with CBL proteins. Binding of a CBL protein to the regulatory NAF domain of CIPK protein lead to the activation of the kinase in a calcium-dependent manner. Downstream of CBL1, CBL2, CBL3 and CBL9, regulates by phosphorylation the K(+) conductance and uptake of AKT1. Binds to CBL4 to modulate AKT2 activity by promoting a kinase interaction-dependent but phosphorylation-independent translocation of the channel to the plasma membrane. This is CBL-interacting serine/threonine-protein kinase 6 (CIPK6) from Arabidopsis thaliana (Mouse-ear cress).